The following is a 66-amino-acid chain: COP-associated protein (66 aa).

One can recognise an HMA domain in the interval 1 to 66; the sequence is MKIDIPVKGM…AILDAGYELG (66 aa). Positions 12 and 15 each coordinate Cu cation.

In terms of biological role, part of a cation-transporting system which is associated with copper export out of the H.pylori cells. This chain is COP-associated protein (copP), found in Helicobacter felis (strain ATCC 49179 / CCUG 28539 / NCTC 12436 / CS1).